A 174-amino-acid chain; its full sequence is Crossover junction endodeoxyribonuclease RuvC (174 aa).

Residues Asp-8, Glu-67, and Asp-139 contribute to the active site. Mg(2+) is bound by residues Asp-8, Glu-67, and Asp-139.

It belongs to the RuvC family. In terms of assembly, homodimer which binds Holliday junction (HJ) DNA. The HJ becomes 2-fold symmetrical on binding to RuvC with unstacked arms; it has a different conformation from HJ DNA in complex with RuvA. In the full resolvosome a probable DNA-RuvA(4)-RuvB(12)-RuvC(2) complex forms which resolves the HJ. Mg(2+) is required as a cofactor.

The protein localises to the cytoplasm. It catalyses the reaction Endonucleolytic cleavage at a junction such as a reciprocal single-stranded crossover between two homologous DNA duplexes (Holliday junction).. Functionally, the RuvA-RuvB-RuvC complex processes Holliday junction (HJ) DNA during genetic recombination and DNA repair. Endonuclease that resolves HJ intermediates. Cleaves cruciform DNA by making single-stranded nicks across the HJ at symmetrical positions within the homologous arms, yielding a 5'-phosphate and a 3'-hydroxyl group; requires a central core of homology in the junction. The consensus cleavage sequence is 5'-(A/T)TT(C/G)-3'. Cleavage occurs on the 3'-side of the TT dinucleotide at the point of strand exchange. HJ branch migration catalyzed by RuvA-RuvB allows RuvC to scan DNA until it finds its consensus sequence, where it cleaves and resolves the cruciform DNA. In Pseudomonas fluorescens (strain ATCC BAA-477 / NRRL B-23932 / Pf-5), this protein is Crossover junction endodeoxyribonuclease RuvC.